Reading from the N-terminus, the 657-residue chain is Threonine--tRNA ligase (657 aa).

A TGS domain is found at 1-62 (MALDITFPDG…AHSGQLQIMT (62 aa)). The catalytic stretch occupies residues 240-538 (DHRVIGRDLD…LTEIYKGAFP (299 aa)). Cys-334, His-385, and His-515 together coordinate Zn(2+).

The protein belongs to the class-II aminoacyl-tRNA synthetase family. As to quaternary structure, homodimer. The cofactor is Zn(2+).

Its subcellular location is the cytoplasm. It carries out the reaction tRNA(Thr) + L-threonine + ATP = L-threonyl-tRNA(Thr) + AMP + diphosphate + H(+). Functionally, catalyzes the attachment of threonine to tRNA(Thr) in a two-step reaction: L-threonine is first activated by ATP to form Thr-AMP and then transferred to the acceptor end of tRNA(Thr). Also edits incorrectly charged L-seryl-tRNA(Thr). This chain is Threonine--tRNA ligase, found in Lacticaseibacillus paracasei (strain ATCC 334 / BCRC 17002 / CCUG 31169 / CIP 107868 / KCTC 3260 / NRRL B-441) (Lactobacillus paracasei).